A 795-amino-acid polypeptide reads, in one-letter code: TBC1 domain family member 5 (795 aa).

The span at 1-13 shows a compositional bias: basic and acidic residues; the sequence is MYHSLSETRHPLQ. The disordered stretch occupies residues 1–49; sequence MYHSLSETRHPLQPEEQEVGIDPLSSYSNKSGGDSNKNGRRTSSTLDSE. Residues 25 to 49 show a composition bias toward polar residues; it reads SSYSNKSGGDSNKNGRRTSSTLDSE. Thr-42 is modified (phosphothreonine). Residues Ser-43 and Ser-44 each carry the phosphoserine modification. The interval 56–64 is required for interaction with retromer; involved in interaction with ATG8 family proteins; that stretch reads RKEWEELFV. Positions 57-62 match the LIR 1 motif; that stretch reads KEWEEL. The Rab-GAP TBC domain occupies 81–359; it reads LRSSRFRSIC…VVWDALFADG (279 aa). Position 460 is a phosphoserine (Ser-460). The tract at residues 475 to 564 is disordered; sequence PGSAGGPVPG…PPSSATKKDS (90 aa). Residues 484 to 496 are compositionally biased toward low complexity; sequence GGNSSSSSSVVIP. 8 positions are modified to phosphoserine: Ser-522, Ser-539, Ser-541, Ser-544, Ser-554, Ser-570, Ser-584, and Ser-730. A compositionally biased stretch (polar residues) spans 523-542; that stretch reads MPVQLNKGLSSKNISSSPSV. Positions 554 to 564 are enriched in polar residues; sequence SPPSSATKKDS. The tract at residues 674–795 is disordered; it reads HYCSSGQGQG…GFTIVSPLDI (122 aa). A compositionally biased stretch (polar residues) spans 727–748; it reads ARGSFSGQAQPLRTLRSTSGKS. Low complexity predominate over residues 765-776; the sequence is PASASSSNPSSS. The short motif at 785-789 is the LIR 2 element; the sequence is SGFTI. Residues 786–791 are required for interaction with ATG8 family proteins; sequence GFTIVS. Ser-791 carries the post-translational modification Phosphoserine.

As to quaternary structure, interacts with MAP1LC3A, MAP1LC3B, MAP1LC3C, GABARAP, GABARAPL1, GABARAPL2. Interacts with VPS29 and VPS35; indicative for an association with retromer CSC subcomplex. MAP1LC3A and VPS29 compete for binding to TBC1D5. Interacts with AP2M1; indicative for an association with the AP2 complex. Interacts with ULK1 and ATG13 (phosphorylated); indicative for an association with the activated ULK1-ATG13-FIP200 complex. Interacts with ATG9A; the interactions seems to be restricted to the AP2-clathrin-associated fraction of ATG9A.

The protein localises to the endosome membrane. The protein resides in the cytoplasmic vesicle. It localises to the autophagosome. May act as a GTPase-activating protein (GAP) for Rab family protein(s). May act as a GAP for RAB7A. Can displace RAB7A and retromer CSC subcomplex from the endosomal membrane to the cytosol; at least retromer displacement seems to require its catalytic activity. Required for retrograde transport of cargo proteins from endosomes to the trans-Golgi network (TGN); the function seems to require its catalytic activity. Involved in regulation of autophagy. May act as a molecular switch between endosomal and autophagosomal transport and is involved in reprogramming vesicle trafficking upon autophagy induction. Involved in the trafficking of ATG9A upon activation of autophagy. May regulate the recruitment of ATG9A-AP2-containing vesicles to autophagic membranes. The chain is TBC1 domain family member 5 (TBC1D5) from Homo sapiens (Human).